The chain runs to 325 residues: Ribonucleoside-diphosphate reductase small chain (325 aa).

Fe cation contacts are provided by aspartate 74, glutamate 105, and histidine 108. Residue tyrosine 112 is part of the active site. Fe cation-binding residues include glutamate 168, glutamate 202, and histidine 205.

The protein belongs to the ribonucleoside diphosphate reductase small chain family. Heterodimer of a large and a small chain. Requires Fe cation as cofactor.

It catalyses the reaction a 2'-deoxyribonucleoside 5'-diphosphate + [thioredoxin]-disulfide + H2O = a ribonucleoside 5'-diphosphate + [thioredoxin]-dithiol. In terms of biological role, ribonucleoside-diphosphate reductase holoenzyme provides the precursors necessary for viral DNA synthesis. Allows virus growth in non-dividing cells. Catalyzes the biosynthesis of deoxyribonucleotides from the corresponding ribonucleotides. The polypeptide is Ribonucleoside-diphosphate reductase small chain (Yaba-like disease virus (YLDV)).